A 397-amino-acid chain; its full sequence is Decapping and exoribonuclease protein (397 aa).

The span at 1–20 shows a compositional bias: basic and acidic residues; sequence MESRGTKREAGKIEVAEPRN. Positions 1–37 are disordered; it reads MESRGTKREAGKIEVAEPRNKLPRPAPSLPTDPALYS. Residue Arg58 participates in substrate binding. Positions 67–88 are disordered; the sequence is LRYYSPPPTNGQSPNFDLRDGY. Residues Glu101 and 131 to 133 each bind substrate; that span reads WRG. Glu192 serves as a coordination point for Mg(2+). Substrate-binding residues include Cys217 and Glu234. Residues Glu234, Asp236, Glu253, and Leu254 each contribute to the Mg(2+) site. Substrate is bound by residues Lys255 and Gln280. At Thr392 the chain carries Phosphothreonine. At Ser394 the chain carries Phosphoserine.

This sequence belongs to the DXO/Dom3Z family. Requires Mg(2+) as cofactor.

Its subcellular location is the nucleus. It catalyses the reaction a 5'-end triphospho-ribonucleoside in mRNA + H2O = a 5'-end phospho-ribonucleoside in mRNA + diphosphate + H(+). The enzyme catalyses a 5'-end NAD(+)-phospho-ribonucleoside in mRNA + H2O = a 5'-end phospho-ribonucleoside in mRNA + NAD(+) + H(+). The catalysed reaction is a 5'-end NAD(+)-phospho-ribonucleoside in snoRNA + H2O = a 5'-end phospho-ribonucleoside in snoRNA + NAD(+) + H(+). It carries out the reaction a 5'-end (N(7)-methyl 5'-triphosphoguanosine)-ribonucleoside-ribonucleotide in mRNA + H2O = a (N(7)-methyl 5'-triphosphoguanosine)-nucleoside + a 5'-end phospho-ribonucleoside in mRNA + H(+). It catalyses the reaction a 5'-end FAD-phospho-ribonucleoside in mRNA + H2O = a 5'-end phospho-ribonucleoside in mRNA + FAD + H(+). The enzyme catalyses a 5'-end CoA-ribonucleoside in mRNA + H2O = 3'-dephospho-CoA + a 5'-end phospho-ribonucleoside in mRNA + H(+). Functionally, decapping enzyme for NAD-capped RNAs: specifically hydrolyzes the nicotinamide adenine dinucleotide (NAD) cap from a subset of RNAs by removing the entire NAD moiety from the 5'-end of an NAD-capped RNA. The NAD-cap is present at the 5'-end of some RNAs and snoRNAs. In contrast to the canonical 5'-end N7 methylguanosine (m7G) cap, the NAD cap promotes mRNA decay. Preferentially acts on NAD-capped transcripts in response to environmental stress. Also acts as a non-canonical decapping enzyme that removes the entire cap structure of m7G capped or incompletely capped RNAs and mediates their subsequent degradation. Specifically degrades pre-mRNAs with a defective 5'-end m7G cap and is part of a pre-mRNA capping quality control. Has decapping activity toward incomplete 5'-end m7G cap mRNAs such as unmethylated 5'-end-capped RNA (cap0), while it has no activity toward 2'-O-ribose methylated m7G cap (cap1). In contrast to canonical decapping enzymes DCP2 and NUDT16, which cleave the cap within the triphosphate linkage, the decapping activity releases the entire cap structure GpppN and a 5'-end monophosphate RNA. Also has 5'-3' exoribonuclease activities: The 5'-end monophosphate RNA is then degraded by the 5'-3' exoribonuclease activity, enabling this enzyme to decap and degrade incompletely capped mRNAs. Also possesses RNA 5'-pyrophosphohydrolase activity by hydrolyzing the 5'-end triphosphate to release pyrophosphates. Exhibits decapping activity towards FAD-capped RNAs. Exhibits decapping activity towards dpCoA-capped RNAs in vitro. The chain is Decapping and exoribonuclease protein from Bos taurus (Bovine).